A 384-amino-acid polypeptide reads, in one-letter code: Alanine racemase (384 aa).

K46 acts as the Proton acceptor; specific for D-alanine in catalysis. K46 carries the post-translational modification N6-(pyridoxal phosphate)lysine. R144 provides a ligand contact to substrate. The active-site Proton acceptor; specific for L-alanine is Y278. Substrate is bound at residue M326.

It belongs to the alanine racemase family. Pyridoxal 5'-phosphate serves as cofactor.

It catalyses the reaction L-alanine = D-alanine. The protein operates within amino-acid biosynthesis; D-alanine biosynthesis; D-alanine from L-alanine: step 1/1. Catalyzes the interconversion of L-alanine and D-alanine. May also act on other amino acids. This is Alanine racemase (alr) from Frankia casuarinae (strain DSM 45818 / CECT 9043 / HFP020203 / CcI3).